Consider the following 248-residue polypeptide: mRNA-decapping protein OPG122 (248 aa).

The region spanning His-45–Lys-227 is the Nudix hydrolase domain. The Nudix box motif lies at Gly-126–Asn-147. Glu-132 is a Mg(2+) binding site. Glu-141 functions as the Nucleophile in the catalytic mechanism. Glu-145 serves as a coordination point for Mn(2+). Asp-167 lines the Mg(2+) pocket.

This sequence belongs to the Nudix hydrolase family. The cofactor is Mg(2+). Mn(2+) serves as cofactor.

Its subcellular location is the host mitochondrion. Decapping enzyme that remove the protective 5'-cap from both host and viral mRNAs to commit transcripts for decay by the cellular exonuclease XRN1. Preferentially targets spliced mRNAs and since all viral genes are intronless, it preferentially targets host over viral transcripts. Acceleration of the turnover of cellular transcripts promotes the shutoff of host protein synthesis and therefore diminish the magnitude of antiviral response. This Bos taurus (Bovine) protein is mRNA-decapping protein OPG122 (OPG122).